A 380-amino-acid chain; its full sequence is Lipoyl synthase, mitochondrial (380 aa).

7 residues coordinate [4Fe-4S] cluster: C104, C109, C115, C135, C139, C142, and S350. Positions 120–339 constitute a Radical SAM core domain; the sequence is EHGTQTATIM…ETRGNELGFL (220 aa).

This sequence belongs to the radical SAM superfamily. Lipoyl synthase family. Requires [4Fe-4S] cluster as cofactor.

The protein resides in the mitochondrion. The catalysed reaction is [[Fe-S] cluster scaffold protein carrying a second [4Fe-4S](2+) cluster] + N(6)-octanoyl-L-lysyl-[protein] + 2 oxidized [2Fe-2S]-[ferredoxin] + 2 S-adenosyl-L-methionine + 4 H(+) = [[Fe-S] cluster scaffold protein] + N(6)-[(R)-dihydrolipoyl]-L-lysyl-[protein] + 4 Fe(3+) + 2 hydrogen sulfide + 2 5'-deoxyadenosine + 2 L-methionine + 2 reduced [2Fe-2S]-[ferredoxin]. Its pathway is protein modification; protein lipoylation via endogenous pathway; protein N(6)-(lipoyl)lysine from octanoyl-[acyl-carrier-protein]: step 2/2. Catalyzes the radical-mediated insertion of two sulfur atoms into the C-6 and C-8 positions of the octanoyl moiety bound to the lipoyl domains of lipoate-dependent enzymes, thereby converting the octanoylated domains into lipoylated derivatives. This is Lipoyl synthase, mitochondrial from Culex quinquefasciatus (Southern house mosquito).